The following is a 342-amino-acid chain: UDP-3-O-acylglucosamine N-acyltransferase (342 aa).

His-253 (proton acceptor) is an active-site residue.

It belongs to the transferase hexapeptide repeat family. LpxD subfamily. As to quaternary structure, homotrimer.

It carries out the reaction a UDP-3-O-[(3R)-3-hydroxyacyl]-alpha-D-glucosamine + a (3R)-hydroxyacyl-[ACP] = a UDP-2-N,3-O-bis[(3R)-3-hydroxyacyl]-alpha-D-glucosamine + holo-[ACP] + H(+). It functions in the pathway bacterial outer membrane biogenesis; LPS lipid A biosynthesis. Functionally, catalyzes the N-acylation of UDP-3-O-acylglucosamine using 3-hydroxyacyl-ACP as the acyl donor. Is involved in the biosynthesis of lipid A, a phosphorylated glycolipid that anchors the lipopolysaccharide to the outer membrane of the cell. This chain is UDP-3-O-acylglucosamine N-acyltransferase, found in Rickettsia canadensis (strain McKiel).